The following is a 91-amino-acid chain: Bombyxin C-1 (91 aa).

Positions Met1–Ala19 are cleaved as a signal peptide. At Gln20 the chain carries Pyrrolidone carboxylic acid. Disulfide bonds link Cys27–Cys76, Cys39–Cys89, and Cys75–Cys80. Residues Ser47 to Gly67 constitute a propeptide, c peptide like.

It belongs to the insulin family. As to quaternary structure, heterodimer of a B chain and an A chain linked by two disulfide bonds.

It localises to the secreted. Brain peptide responsible for activation of prothoracic glands to produce ecdysone in insects. The polypeptide is Bombyxin C-1 (BBXC1) (Bombyx mori (Silk moth)).